We begin with the raw amino-acid sequence, 163 residues long: Ribonuclease H (163 aa).

The RNase H type-1 domain occupies 1–142 (MRKQVAIFTD…CDELARTAAC (142 aa)). Residues aspartate 10, glutamate 48, aspartate 70, and aspartate 134 each coordinate Mg(2+).

The protein belongs to the RNase H family. As to quaternary structure, monomer. Mg(2+) is required as a cofactor.

Its subcellular location is the cytoplasm. It catalyses the reaction Endonucleolytic cleavage to 5'-phosphomonoester.. Functionally, endonuclease that specifically degrades the RNA of RNA-DNA hybrids. The polypeptide is Ribonuclease H (Sodalis glossinidius (strain morsitans)).